Consider the following 424-residue polypeptide: Serine--tRNA ligase (424 aa).

Residue 231 to 233 (TAE) coordinates L-serine. An ATP-binding site is contributed by 262 to 264 (RSE). Glu285 lines the L-serine pocket. 349–352 (EISS) is a binding site for ATP. L-serine is bound at residue Ser385.

It belongs to the class-II aminoacyl-tRNA synthetase family. Type-1 seryl-tRNA synthetase subfamily. In terms of assembly, homodimer. The tRNA molecule binds across the dimer.

Its subcellular location is the cytoplasm. It catalyses the reaction tRNA(Ser) + L-serine + ATP = L-seryl-tRNA(Ser) + AMP + diphosphate + H(+). The catalysed reaction is tRNA(Sec) + L-serine + ATP = L-seryl-tRNA(Sec) + AMP + diphosphate + H(+). It functions in the pathway aminoacyl-tRNA biosynthesis; selenocysteinyl-tRNA(Sec) biosynthesis; L-seryl-tRNA(Sec) from L-serine and tRNA(Sec): step 1/1. Its function is as follows. Catalyzes the attachment of serine to tRNA(Ser). Is also able to aminoacylate tRNA(Sec) with serine, to form the misacylated tRNA L-seryl-tRNA(Sec), which will be further converted into selenocysteinyl-tRNA(Sec). The sequence is that of Serine--tRNA ligase from Bacillus pumilus (strain SAFR-032).